A 296-amino-acid polypeptide reads, in one-letter code: tRNA pseudouridine synthase B (296 aa).

The Nucleophile role is filled by aspartate 38.

The protein belongs to the pseudouridine synthase TruB family. Type 1 subfamily.

The enzyme catalyses uridine(55) in tRNA = pseudouridine(55) in tRNA. Functionally, responsible for synthesis of pseudouridine from uracil-55 in the psi GC loop of transfer RNAs. This chain is tRNA pseudouridine synthase B, found in Synechocystis sp. (strain ATCC 27184 / PCC 6803 / Kazusa).